The sequence spans 63 residues: Large ribosomal subunit protein uL29 (63 aa).

It belongs to the universal ribosomal protein uL29 family.

The protein is Large ribosomal subunit protein uL29 of Vibrio campbellii (strain ATCC BAA-1116).